The following is a 393-amino-acid chain: Adaptive-response sensory kinase SasA (393 aa).

The 223-residue stretch at 171-393 (MLAHDLRSPL…CFHFTLPVFR (223 aa)) folds into the Histidine kinase domain. Histidine 174 bears the Phosphohistidine; by autocatalysis mark.

As to quaternary structure, homooligomerizes. Interacts with KaiC. Participates in the KaiABC clock complex, whose core is composed of a KaiC homohexamer, 6 KaiB and up to 6 KaiA dimers. SasA and KaiB(fs) compete to bind to KaiC.

The catalysed reaction is ATP + protein L-histidine = ADP + protein N-phospho-L-histidine.. In terms of biological role, member of the two-component regulatory system SasA/RpaA involved in genome-wide circadian gene expression. One of several clock output pathways. Participates in the Kai clock protein complex, the main circadian regulator in cyanobacteria, via its interaction with KaiC. KaiC enhances the autophosphorylation activity of SasA, which then transfers its phosphate group to RpaA to activate it. In addition to its output function, recruits fold-shifted KaiB (KaiB(fs)) to KaiC to cooperatively form the KaiB(6):KaiC(6) complex (independent of SasA kinase activity). Required for robustness of the circadian rhythm of gene expression and is involved in clock output, also required for adaptation to light/dark cycles. This Gloeothece citriformis (strain PCC 7424) (Cyanothece sp. (strain PCC 7424)) protein is Adaptive-response sensory kinase SasA.